The primary structure comprises 112 residues: MKKIEAIIRPFKLDEVKIALVNAGIVGMTVSEVRGFGRQKGQTERYRGSEYTVEFLQKLKLEIVVEDAQVDTVIDKIVAAARTGEIGDGKIFVSPVDQTIRIRTGEKNADAI.

Serine 49 is subject to Phosphoserine. O-UMP-tyrosine is present on tyrosine 51.

Belongs to the P(II) protein family. As to quaternary structure, homotrimer. Phosphorylation dependent on the nitrogen source and spectral light quality.

P-II indirectly controls the transcription of the GS gene (glnA). P-II prevents NR-II-catalyzed conversion of NR-I to NR-I-phosphate, the transcriptional activator of glnA. When P-II is phosphorylated, these events are reversed. In nitrogen-limiting conditions, when the ratio of Gln to 2-ketoglutarate decreases, P-II is phosphorylated which allows the deadenylation of glutamine synthetase (GS), thus activating the enzyme. The protein is Nitrogen regulatory protein P-II (glnB) of Synechococcus elongatus (strain ATCC 33912 / PCC 7942 / FACHB-805) (Anacystis nidulans R2).